The following is a 163-amino-acid chain: Calcium-binding protein I (163 aa).

3 consecutive EF-hand domains span residues Asp20–Asn42, Lys82–Gly117, and Asn118–Asp153. Ca(2+) contacts are provided by Asp95, Asn97, Asp99, Met101, Glu106, Asp131, Asn133, Glu135, Ser137, and Asp142.

The protein is Calcium-binding protein I (cbpI) of Dictyostelium discoideum (Social amoeba).